A 197-amino-acid chain; its full sequence is Imidazoleglycerol-phosphate dehydratase (197 aa).

This sequence belongs to the imidazoleglycerol-phosphate dehydratase family.

The protein resides in the cytoplasm. It carries out the reaction D-erythro-1-(imidazol-4-yl)glycerol 3-phosphate = 3-(imidazol-4-yl)-2-oxopropyl phosphate + H2O. It functions in the pathway amino-acid biosynthesis; L-histidine biosynthesis; L-histidine from 5-phospho-alpha-D-ribose 1-diphosphate: step 6/9. This Halorhodospira halophila (strain DSM 244 / SL1) (Ectothiorhodospira halophila (strain DSM 244 / SL1)) protein is Imidazoleglycerol-phosphate dehydratase.